A 227-amino-acid chain; its full sequence is Phosphatidylserine decarboxylase proenzyme (227 aa).

The active-site Schiff-base intermediate with substrate; via pyruvic acid is the serine 184. A Pyruvic acid (Ser); by autocatalysis modification is found at serine 184.

Belongs to the phosphatidylserine decarboxylase family. PSD-A subfamily. As to quaternary structure, heterodimer of a large membrane-associated beta subunit and a small pyruvoyl-containing alpha subunit. It depends on pyruvate as a cofactor. Is synthesized initially as an inactive proenzyme. Formation of the active enzyme involves a self-maturation process in which the active site pyruvoyl group is generated from an internal serine residue via an autocatalytic post-translational modification. Two non-identical subunits are generated from the proenzyme in this reaction, and the pyruvate is formed at the N-terminus of the alpha chain, which is derived from the carboxyl end of the proenzyme. The post-translation cleavage follows an unusual pathway, termed non-hydrolytic serinolysis, in which the side chain hydroxyl group of the serine supplies its oxygen atom to form the C-terminus of the beta chain, while the remainder of the serine residue undergoes an oxidative deamination to produce ammonia and the pyruvoyl prosthetic group on the alpha chain.

It is found in the cell membrane. The catalysed reaction is a 1,2-diacyl-sn-glycero-3-phospho-L-serine + H(+) = a 1,2-diacyl-sn-glycero-3-phosphoethanolamine + CO2. Its pathway is phospholipid metabolism; phosphatidylethanolamine biosynthesis; phosphatidylethanolamine from CDP-diacylglycerol: step 2/2. In terms of biological role, catalyzes the formation of phosphatidylethanolamine (PtdEtn) from phosphatidylserine (PtdSer). The chain is Phosphatidylserine decarboxylase proenzyme from Ehrlichia ruminantium (strain Welgevonden).